The sequence spans 428 residues: Adenylosuccinate synthetase (428 aa).

GTP is bound by residues 12–18 (GDEGKGK) and 40–42 (GHT). Asp13 functions as the Proton acceptor in the catalytic mechanism. Mg(2+)-binding residues include Asp13 and Gly40. IMP contacts are provided by residues 13–16 (DEGK), 38–41 (NAGH), Thr129, Arg143, Gln224, Thr239, and Arg303. The active-site Proton donor is the His41. Residue 299-305 (VTTGRIR) participates in substrate binding. GTP-binding positions include Arg305, 331 to 333 (KVD), and 410 to 412 (AYG).

Belongs to the adenylosuccinate synthetase family. Homodimer. Mg(2+) is required as a cofactor.

It localises to the cytoplasm. It catalyses the reaction IMP + L-aspartate + GTP = N(6)-(1,2-dicarboxyethyl)-AMP + GDP + phosphate + 2 H(+). Its pathway is purine metabolism; AMP biosynthesis via de novo pathway; AMP from IMP: step 1/2. In terms of biological role, plays an important role in the de novo pathway of purine nucleotide biosynthesis. Catalyzes the first committed step in the biosynthesis of AMP from IMP. This is Adenylosuccinate synthetase from Francisella tularensis subsp. novicida (strain U112).